Reading from the N-terminus, the 130-residue chain is Small ribosomal subunit protein uS9 (130 aa).

It belongs to the universal ribosomal protein uS9 family.

In Burkholderia thailandensis (strain ATCC 700388 / DSM 13276 / CCUG 48851 / CIP 106301 / E264), this protein is Small ribosomal subunit protein uS9.